The following is a 150-amino-acid chain: Protein E6 (150 aa).

2 zinc fingers span residues 31–67 (CVFC…CACC) and 104–140 (CYLC…CLHC).

This sequence belongs to the papillomaviridae E6 protein family. As to quaternary structure, forms homodimers. Interacts with ubiquitin-protein ligase UBE3A/E6-AP; this interaction stimulates UBE3A ubiquitin activity. Interacts with host TP53 and EP300; this interaction inhibits TP53 activity.

The protein resides in the host cytoplasm. It localises to the host nucleus. Its function is as follows. Plays a major role in the induction and maintenance of cellular transformation. E6 associates with host UBE3A/E6-AP ubiquitin-protein ligase and modulates its activity. Sequesters tumor suppressor TP53 in the host cytoplasm and modulates its activity by interacting with host EP300 that results in the reduction of TP53 acetylation and activation. In turn, apoptosis induced by DNA damage is inhibited. E6 also protects host keratinocytes from apoptosis by mediating the degradation of host BAK1. May also inhibit host immune response. This chain is Protein E6, found in Human papillomavirus 11.